Reading from the N-terminus, the 264-residue chain is Hydroxyethylthiazole kinase (264 aa).

Position 45 (M45) interacts with substrate. The ATP site is built by R121 and S167. G194 lines the substrate pocket.

This sequence belongs to the Thz kinase family. Mg(2+) serves as cofactor.

It catalyses the reaction 5-(2-hydroxyethyl)-4-methylthiazole + ATP = 4-methyl-5-(2-phosphooxyethyl)-thiazole + ADP + H(+). The protein operates within cofactor biosynthesis; thiamine diphosphate biosynthesis; 4-methyl-5-(2-phosphoethyl)-thiazole from 5-(2-hydroxyethyl)-4-methylthiazole: step 1/1. In terms of biological role, catalyzes the phosphorylation of the hydroxyl group of 4-methyl-5-beta-hydroxyethylthiazole (THZ). In Aliivibrio salmonicida (strain LFI1238) (Vibrio salmonicida (strain LFI1238)), this protein is Hydroxyethylthiazole kinase.